The chain runs to 190 residues: dCTP deaminase (190 aa).

113–118 (KSTYAR) is a binding site for dCTP. The active-site Proton donor/acceptor is Glu139. Residues Gln158, Tyr172, Lys181, and Gln182 each contribute to the dCTP site.

It belongs to the dCTP deaminase family. In terms of assembly, homotrimer.

The enzyme catalyses dCTP + H2O + H(+) = dUTP + NH4(+). The protein operates within pyrimidine metabolism; dUMP biosynthesis; dUMP from dCTP (dUTP route): step 1/2. Catalyzes the deamination of dCTP to dUTP. The protein is dCTP deaminase of Chlamydia caviae (strain ATCC VR-813 / DSM 19441 / 03DC25 / GPIC) (Chlamydophila caviae).